The primary structure comprises 187 residues: Ribose 1,5-bisphosphate phosphokinase PhnN (187 aa).

ATP is bound at residue 9–16; it reads GPSGSGKD.

Belongs to the ribose 1,5-bisphosphokinase family.

It catalyses the reaction alpha-D-ribose 1,5-bisphosphate + ATP = 5-phospho-alpha-D-ribose 1-diphosphate + ADP. The protein operates within metabolic intermediate biosynthesis; 5-phospho-alpha-D-ribose 1-diphosphate biosynthesis; 5-phospho-alpha-D-ribose 1-diphosphate from D-ribose 5-phosphate (route II): step 3/3. In terms of biological role, catalyzes the phosphorylation of ribose 1,5-bisphosphate to 5-phospho-D-ribosyl alpha-1-diphosphate (PRPP). The polypeptide is Ribose 1,5-bisphosphate phosphokinase PhnN (Desulfomicrobium baculatum (strain DSM 4028 / VKM B-1378 / X) (Desulfovibrio baculatus)).